Here is a 41-residue protein sequence, read N- to C-terminus: Photosystem I reaction center subunit IX (41 aa).

Residues 7–27 (YLSSAPILATIWFAITAGILI) form a helical membrane-spanning segment.

The protein belongs to the PsaJ family.

It localises to the cellular thylakoid membrane. May help in the organization of the PsaE and PsaF subunits. The chain is Photosystem I reaction center subunit IX from Synechococcus sp. (strain ATCC 27144 / PCC 6301 / SAUG 1402/1) (Anacystis nidulans).